The sequence spans 145 residues: Small ribosomal subunit protein eS19 (145 aa).

The residue at position 23 (lysine 23) is an N6-acetyllysine. At arginine 67 the chain carries Omega-N-methylarginine. 2 positions are modified to N6-acetyllysine: lysine 111 and lysine 115. The residue at position 143 (lysine 143) is an N6-succinyllysine.

The protein belongs to the eukaryotic ribosomal protein eS19 family. In terms of assembly, component of the small ribosomal subunit. Part of the small subunit (SSU) processome, composed of more than 70 proteins and the RNA chaperone small nucleolar RNA (snoRNA) U3. Interacts with RPS19BP1.

Its subcellular location is the cytoplasm. It localises to the nucleus. The protein resides in the nucleolus. Functionally, component of the small ribosomal subunit. The ribosome is a large ribonucleoprotein complex responsible for the synthesis of proteins in the cell. Required for pre-rRNA processing and maturation of 40S ribosomal subunits. Part of the small subunit (SSU) processome, first precursor of the small eukaryotic ribosomal subunit. During the assembly of the SSU processome in the nucleolus, many ribosome biogenesis factors, an RNA chaperone and ribosomal proteins associate with the nascent pre-rRNA and work in concert to generate RNA folding, modifications, rearrangements and cleavage as well as targeted degradation of pre-ribosomal RNA by the RNA exosome. This is Small ribosomal subunit protein eS19 (Rps19) from Rattus norvegicus (Rat).